A 731-amino-acid chain; its full sequence is Elongation factor 2 (731 aa).

The tr-type G domain occupies Glu-19–Lys-234. Residues Ala-28–Thr-35, Asp-94–His-98, and Asn-148–Asp-151 contribute to the GTP site. At His-598 the chain carries Diphthamide.

It belongs to the TRAFAC class translation factor GTPase superfamily. Classic translation factor GTPase family. EF-G/EF-2 subfamily.

The protein resides in the cytoplasm. In terms of biological role, catalyzes the GTP-dependent ribosomal translocation step during translation elongation. During this step, the ribosome changes from the pre-translocational (PRE) to the post-translocational (POST) state as the newly formed A-site-bound peptidyl-tRNA and P-site-bound deacylated tRNA move to the P and E sites, respectively. Catalyzes the coordinated movement of the two tRNA molecules, the mRNA and conformational changes in the ribosome. The protein is Elongation factor 2 of Methanobrevibacter ruminantium (strain ATCC 35063 / DSM 1093 / JCM 13430 / OCM 146 / M1) (Methanobacterium ruminantium).